Reading from the N-terminus, the 591-residue chain is Alternative cytochrome c oxidase subunit 1 (591 aa).

The chain crosses the membrane as a helical span at residues 40–60 (VIAIQYSLTASAIGLVALVLS). A heme b-binding site is contributed by His88. 11 consecutive transmembrane segments (helical) span residues 90–110 (MIMV…NYLI), 126–146 (MLSY…FFVP), 172–192 (GIVL…MGGL), 215–235 (VWGI…LFVG), 274–294 (LFWF…FGIV), 313–333 (VWAI…HMYV), 337–357 (YPYF…PTAI), 377–397 (MLFA…GLFL), 412–432 (VVAH…LGAI), 453–473 (FWVT…LGLL), and 498–518 (FITV…FNLV). Cu cation is bound by residues His280, Tyr284, His329, and His330. Positions 280 to 284 (HPEVY) form a cross-link, 1'-histidyl-3'-tyrosine (His-Tyr). Positions 415 and 417 each coordinate heme b.

Belongs to the heme-copper respiratory oxidase family. As to quaternary structure, this alternate cytochrome c oxidase consists of a subunit I and two cytochromes c. Equivalents to subunit 2 and 3 are not present in this complex.

Its subcellular location is the cell membrane. It catalyses the reaction 4 Fe(II)-[cytochrome c] + O2 + 8 H(+)(in) = 4 Fe(III)-[cytochrome c] + 2 H2O + 4 H(+)(out). In terms of biological role, cytochrome c oxidase is the component of the respiratory chain that catalyzes the reduction of oxygen to water. Subunits 1-3 form the functional core of the enzyme complex. Co I is the catalytic subunit of the enzyme. Electrons originating in cytochrome c are transferred via the copper A center of subunit 2 and a low-spin heme of subunit 1 to the bimetallic center formed by a high-spin heme and copper B. This Bradyrhizobium diazoefficiens (strain JCM 10833 / BCRC 13528 / IAM 13628 / NBRC 14792 / USDA 110) protein is Alternative cytochrome c oxidase subunit 1 (coxN).